Reading from the N-terminus, the 1043-residue chain is Protein translocase subunit SecA (1043 aa).

ATP is bound by residues Gln-143, 161–165 (GEGKT), and Asp-665. The segment covering 980-1005 (ATAAPAAETTTTAKAADAARQQPPAA) has biased composition (low complexity). Residues 980–1043 (ATAAPAAETT…KYKHCHGRNA (64 aa)) form a disordered region. Basic and acidic residues predominate over residues 1008-1022 (EEQKRQPVHVEKTPG). 4 residues coordinate Zn(2+): Cys-1027, Cys-1029, Cys-1038, and His-1039. A compositionally biased stretch (basic residues) spans 1033-1043 (KKYKHCHGRNA).

Belongs to the SecA family. Monomer and homodimer. Part of the essential Sec protein translocation apparatus which comprises SecA, SecYEG and auxiliary proteins SecDF. Other proteins may also be involved. It depends on Zn(2+) as a cofactor.

It is found in the cell inner membrane. The protein localises to the cytoplasm. It catalyses the reaction ATP + H2O + cellular proteinSide 1 = ADP + phosphate + cellular proteinSide 2.. Part of the Sec protein translocase complex. Interacts with the SecYEG preprotein conducting channel. Has a central role in coupling the hydrolysis of ATP to the transfer of proteins into and across the cell membrane, serving as an ATP-driven molecular motor driving the stepwise translocation of polypeptide chains across the membrane. The sequence is that of Protein translocase subunit SecA from Chloroherpeton thalassium (strain ATCC 35110 / GB-78).